We begin with the raw amino-acid sequence, 117 residues long: Large ribosomal subunit protein uL18 (117 aa).

Belongs to the universal ribosomal protein uL18 family. In terms of assembly, part of the 50S ribosomal subunit; part of the 5S rRNA/L5/L18/L25 subcomplex. Contacts the 5S and 23S rRNAs.

Its function is as follows. This is one of the proteins that bind and probably mediate the attachment of the 5S RNA into the large ribosomal subunit, where it forms part of the central protuberance. In Photobacterium profundum (strain SS9), this protein is Large ribosomal subunit protein uL18.